A 270-amino-acid polypeptide reads, in one-letter code: Shikimate dehydrogenase (NADP(+)) (270 aa).

Residues 14–16 and T61 contribute to the shikimate site; that span reads SKS. K65 functions as the Proton acceptor in the catalytic mechanism. Shikimate is bound by residues N86 and D101. NADP(+) is bound by residues 126–130, 150–155, and M213; these read GAGGA and NRTVSK. Y215 contributes to the shikimate binding site. G237 serves as a coordination point for NADP(+).

Belongs to the shikimate dehydrogenase family. In terms of assembly, homodimer.

The catalysed reaction is shikimate + NADP(+) = 3-dehydroshikimate + NADPH + H(+). The protein operates within metabolic intermediate biosynthesis; chorismate biosynthesis; chorismate from D-erythrose 4-phosphate and phosphoenolpyruvate: step 4/7. Involved in the biosynthesis of the chorismate, which leads to the biosynthesis of aromatic amino acids. Catalyzes the reversible NADPH linked reduction of 3-dehydroshikimate (DHSA) to yield shikimate (SA). In Hahella chejuensis (strain KCTC 2396), this protein is Shikimate dehydrogenase (NADP(+)).